Reading from the N-terminus, the 392-residue chain is Phosphoglycerate kinase (392 aa).

Residues 21–23 (DMN), Arg-36, 59–62 (HLGR), Arg-114, and Arg-147 contribute to the substrate site. ATP contacts are provided by residues Lys-198, Glu-320, and 346–349 (GGDT).

This sequence belongs to the phosphoglycerate kinase family. As to quaternary structure, monomer.

The protein resides in the cytoplasm. It catalyses the reaction (2R)-3-phosphoglycerate + ATP = (2R)-3-phospho-glyceroyl phosphate + ADP. Its pathway is carbohydrate degradation; glycolysis; pyruvate from D-glyceraldehyde 3-phosphate: step 2/5. This Neisseria meningitidis serogroup C (strain 053442) protein is Phosphoglycerate kinase.